The primary structure comprises 458 residues: NADH-quinone oxidoreductase subunit N (458 aa).

Transmembrane regions (helical) follow at residues 2–22 (LLLL…CFAL), 30–50 (IIYN…FKYS), 71–91 (IILL…ILVG), 93–113 (TLKF…FVAI), 118–138 (FLLL…LAGF), 153–173 (FILG…IYGF), 196–216 (LIIG…SSPL), 235–255 (FTAA…KLII), 261–281 (INYN…AFGA), 290–310 (LMAY…LLHN), 319–339 (LYIL…IMLF), 361–381 (IAAL…LTGF), 397–417 (FTLA…YLKV), and 438–458 (LLLI…IILF).

The protein belongs to the complex I subunit 2 family. In terms of assembly, NDH-1 is composed of 14 different subunits. Subunits NuoA, H, J, K, L, M, N constitute the membrane sector of the complex.

It localises to the cell inner membrane. It catalyses the reaction a quinone + NADH + 5 H(+)(in) = a quinol + NAD(+) + 4 H(+)(out). In terms of biological role, NDH-1 shuttles electrons from NADH, via FMN and iron-sulfur (Fe-S) centers, to quinones in the respiratory chain. The immediate electron acceptor for the enzyme in this species is believed to be ubiquinone. Couples the redox reaction to proton translocation (for every two electrons transferred, four hydrogen ions are translocated across the cytoplasmic membrane), and thus conserves the redox energy in a proton gradient. This is NADH-quinone oxidoreductase subunit N from Rickettsia prowazekii (strain Madrid E).